The following is a 131-amino-acid chain: Nitrogenase-stabilizing/protective protein NifW (131 aa).

The protein belongs to the NifW family. In terms of assembly, homotrimer; associates with NifD.

Functionally, may protect the nitrogenase Fe-Mo protein from oxidative damage. The sequence is that of Nitrogenase-stabilizing/protective protein NifW from Frankia alni (strain DSM 45986 / CECT 9034 / ACN14a).